The primary structure comprises 144 residues: Snaclec coagulation factor IX/factor X-binding protein subunit B1 (144 aa).

The first 23 residues, 1–23 (MGRFIFVSFGLLVVFLSLSGTAA), serve as a signal peptide directing secretion. 3 disulfide bridges follow: C25/C36, C53/C142, and C119/C134. Positions 32 to 143 (YEGHCYKPFN…CRMMANFVCE (112 aa)) constitute a C-type lectin domain.

Belongs to the snaclec family. As to quaternary structure, heterodimer of subunits A and B1; disulfide-linked. In terms of tissue distribution, expressed by the venom gland.

It is found in the secreted. Its function is as follows. Anticoagulant protein which binds to the gamma-carboxyglutamic acid-domain regions of factors IX (F9) and factor X (F10) in the presence of calcium with a 1 to 1 stoichiometry. This chain is Snaclec coagulation factor IX/factor X-binding protein subunit B1, found in Trimeresurus stejnegeri (Chinese green tree viper).